A 348-amino-acid chain; its full sequence is MGCNFSSQSKLQVPEIRASRSITPASQKSEDPYSHIRLLLLGSAESGKTTVLEQVRLLYKQHFTESEYFHRRAFIYHNIFKSIKALCRAMRMSDIQFADPINMGRAQSIIADEHGHYGLFSKDLAEKIKHIWNDKSMQKLYARRSQFNLNDSASYFLNNIDKINMVDYKPSERDLIMAYVPTCGVQNVIFTACNQSFQLFDIGGQKIDRRKWALQYEGIDAIFFCIAISEYDQVMSEDMVTNRLDDALNLLQSISEDPAFATTPIYLFLNEIDVFCEKLSVIPLSKYKPDFKGGDQDDAIDFMENLACEALGKRDRSLYRVYRCIAIDTQMMAELLSTVFKDIAKRKK.

The N-myristoyl glycine moiety is linked to residue glycine 2. Cysteine 3 is lipidated: S-palmitoyl cysteine. The G-alpha domain occupies serine 34–lysine 348. Residues arginine 37–threonine 50 are G1 motif. GTP-binding positions include glycine 42 to threonine 49, isoleucine 176 to threonine 182, aspartate 201 to glutamine 205, asparagine 270 to aspartate 273, and alanine 326. Residues aspartate 174 to threonine 182 are G2 motif. Mg(2+) is bound at residue threonine 182. A G3 motif region spans residues phenylalanine 197–lysine 206. Positions tyrosine 266–aspartate 273 are G4 motif. The segment at cysteine 324–threonine 329 is G5 motif.

This sequence belongs to the G-alpha family. As to quaternary structure, g proteins are composed of 3 units; alpha, beta and gamma. The alpha chain contains the guanine nucleotide binding site.

Guanine nucleotide-binding proteins (G proteins) are involved as modulators or transducers in various transmembrane signaling systems. The protein is Guanine nucleotide-binding protein alpha-13 subunit (gpa-13) of Caenorhabditis elegans.